The primary structure comprises 327 residues: Neurogenic differentiation factor 6-A (327 aa).

Residues 17 to 85 (GANFPRDCVG…KKMTKARVDR (69 aa)) form a disordered region. The span at 24 to 46 (CVGDLKGNKQEPFEKEETLSHVM) shows a compositional bias: basic and acidic residues. Positions 47-63 (DDDDSEKDEDEREDGQD) are enriched in acidic residues. Over residues 68–80 (PRRRGPRKKKMTK) the composition is skewed to basic residues. The Nuclear localization signal motif lies at 74–80 (RKKKMTK). The 53-residue stretch at 88-140 (VRRMEANARERNRMHGLNNALDSLRKVVPCYSKTQKLSKIETLRLAKNYIWAL) folds into the bHLH domain.

In terms of assembly, efficient DNA binding requires dimerization with another bHLH protein. As to expression, embryonic olfactory bulbs. In adult, expressed in brain, eye, intestine, muscle, ovary and skin.

It is found in the nucleus. In terms of biological role, differentiation factor required for neurogenesis. Acts as an upstream activator of isl1. The protein is Neurogenic differentiation factor 6-A of Danio rerio (Zebrafish).